A 335-amino-acid polypeptide reads, in one-letter code: Acetyl-coenzyme A carboxylase carboxyl transferase subunit alpha (335 aa).

The 255-residue stretch at 40 to 294 (QLETLAARRR…KEAIEKHLNA (255 aa)) folds into the CoA carboxyltransferase C-terminal domain.

The protein belongs to the AccA family. Acetyl-CoA carboxylase is a heterohexamer composed of biotin carboxyl carrier protein (AccB), biotin carboxylase (AccC) and two subunits each of ACCase subunit alpha (AccA) and ACCase subunit beta (AccD).

It localises to the cytoplasm. The catalysed reaction is N(6)-carboxybiotinyl-L-lysyl-[protein] + acetyl-CoA = N(6)-biotinyl-L-lysyl-[protein] + malonyl-CoA. The protein operates within lipid metabolism; malonyl-CoA biosynthesis; malonyl-CoA from acetyl-CoA: step 1/1. Functionally, component of the acetyl coenzyme A carboxylase (ACC) complex. First, biotin carboxylase catalyzes the carboxylation of biotin on its carrier protein (BCCP) and then the CO(2) group is transferred by the carboxyltransferase to acetyl-CoA to form malonyl-CoA. This chain is Acetyl-coenzyme A carboxylase carboxyl transferase subunit alpha, found in Prochlorococcus marinus (strain AS9601).